Here is a 53-residue protein sequence, read N- to C-terminus: MNIRLMFTLIALLVLTVSFSGANSCFKRNRQCKGSFLKSACCEGLKCVNGRCT.

The N-terminal stretch at Met1–Asn23 is a signal peptide. Disulfide bonds link Cys25-Cys42, Cys32-Cys47, and Cys41-Cys52.

Expressed by the venom gland.

It localises to the secreted. May have neurotoxic activity. The protein is U1-poneritoxin-Dq5a of Dinoponera quadriceps (South American ant).